The chain runs to 745 residues: Serine/threonine-protein kinase GG21441 (745 aa).

The tract at residues 49-73 (RNQQQNVQKDFDSHNRDCDSPVSST) is disordered. Positions 57-67 (KDFDSHNRDCD) are enriched in basic and acidic residues. 2 consecutive Doublecortin domains span residues 159–245 (LRIK…VEYN) and 315–398 (RIVT…AEDF). A Protein kinase domain is found at 479–737 (YTLGRIIGDG…SEDILDHYWT (259 aa)). Residues 485 to 493 (IGDGNFAIV) and Lys-508 each bind ATP. Asp-600 functions as the Proton acceptor in the catalytic mechanism.

The protein belongs to the protein kinase superfamily. CAMK Ser/Thr protein kinase family. CaMK subfamily.

The enzyme catalyses L-seryl-[protein] + ATP = O-phospho-L-seryl-[protein] + ADP + H(+). It carries out the reaction L-threonyl-[protein] + ATP = O-phospho-L-threonyl-[protein] + ADP + H(+). This is Serine/threonine-protein kinase GG21441 from Drosophila erecta (Fruit fly).